Consider the following 239-residue polypeptide: Tetraspanin-9 (239 aa).

The Cytoplasmic portion of the chain corresponds to 1-13 (MARGCLCCVKYMM). The chain crosses the membrane as a helical span at residues 14–34 (FLFNLLFWLSGCGLLGVGIWL). The Extracellular portion of the chain corresponds to 35 to 55 (SVSQGSFATFSPSFPSLSAAN). The chain crosses the membrane as a helical span at residues 56–76 (LVITLGSVVMVTGFLGCLGAI). Residues 77–85 (KENKCLLLS) lie on the Cytoplasmic side of the membrane. A helical transmembrane segment spans residues 86-106 (FFIVLLIILLAELILLILFFV). Over 107 to 203 (YTEKVSENAK…VEEWLNDNKH (97 aa)) the chain is Extracellular. Asparagine 180 carries N-linked (GlcNAc...) asparagine glycosylation. Residues 204–224 (LLGTIAMCVLVLQLLGMAFSM) form a helical membrane-spanning segment. Topologically, residues 225–239 (TLYQQIHRAGKKYDA) are cytoplasmic.

It belongs to the tetraspanin (TM4SF) family.

The protein resides in the membrane. The protein is Tetraspanin-9 (tspan9) of Danio rerio (Zebrafish).